A 239-amino-acid chain; its full sequence is tRNA (guanine-N(1)-)-methyltransferase (239 aa).

S-adenosyl-L-methionine-binding positions include G109 and 128–133 (IGDYVL).

Belongs to the RNA methyltransferase TrmD family. As to quaternary structure, homodimer.

It is found in the cytoplasm. It carries out the reaction guanosine(37) in tRNA + S-adenosyl-L-methionine = N(1)-methylguanosine(37) in tRNA + S-adenosyl-L-homocysteine + H(+). In terms of biological role, specifically methylates guanosine-37 in various tRNAs. The sequence is that of tRNA (guanine-N(1)-)-methyltransferase from Thermus thermophilus (strain ATCC 27634 / DSM 579 / HB8).